A 78-amino-acid chain; its full sequence is Ubiquinol-cytochrome-c reductase complex assembly factor 3 (78 aa).

The Mitochondrial matrix portion of the chain corresponds to 1 to 5; that stretch reads MSGMR. Residues 6 to 26 form a helical membrane-spanning segment; the sequence is ILTGSVALGGLTYAIWIIFSP. Residues 27-78 lie on the Mitochondrial intermembrane side of the membrane; it reads GEERKKEILKSLPEANPVRMEETRKRNAIMLQVLKDAAETNDNIARGFGSQK.

This sequence belongs to the UQCC3 family. Associates with the ubiquinol-cytochrome c reductase complex (mitochondrial respiratory chain complex III or cytochrome b-c1 complex).

Its subcellular location is the mitochondrion inner membrane. Required for the assembly of the ubiquinol-cytochrome c reductase complex (mitochondrial respiratory chain complex III or cytochrome b-c1 complex), mediating cytochrome b recruitment and probably stabilization within the complex. Thereby, plays an important role in ATP production by mitochondria. Cardiolipin-binding protein, it may also control the cardiolipin composition of mitochondria membranes and their morphology. This is Ubiquinol-cytochrome-c reductase complex assembly factor 3 from Danio rerio (Zebrafish).